The chain runs to 232 residues: DQGAGVTYLEPTGSQIGHKESIKDTARVLGRMYDGIEYRGFGQEIVEELAQYAGVPVFNGLTNEFHPTQMLADALTMREHSSKPLNEIAFAYVGDARFNMGNSLLLLGAKMGMDVRIGAPKALWPSENIIAQARALAEETGAKVTLTENAEEAVQGVDFIHTDVWVSMGEPKETWEERIALLKSFRVTPELMAASGNPNVKFMHCLPAFHNRETKVGEWIYETFGLNGVEVT.

Residues Q15, R39, and 66–69 (HPTQ) each bind carbamoyl phosphate. Residues N99, D163, and 167 to 168 (SM) each bind L-ornithine. Residues 204 to 207 (HCLP) and T232 contribute to the carbamoyl phosphate site.

The protein belongs to the aspartate/ornithine carbamoyltransferase superfamily. OTCase family.

Its subcellular location is the cytoplasm. It catalyses the reaction carbamoyl phosphate + L-ornithine = L-citrulline + phosphate + H(+). It functions in the pathway amino-acid biosynthesis; L-arginine biosynthesis; L-arginine from L-ornithine and carbamoyl phosphate: step 1/3. This Neisseria animalis protein is Ornithine carbamoyltransferase (argF).